A 423-amino-acid polypeptide reads, in one-letter code: Enolase (423 aa).

Residue Q163 coordinates (2R)-2-phosphoglycerate. E205 serves as the catalytic Proton donor. Mg(2+)-binding residues include D242, E285, and D312. (2R)-2-phosphoglycerate contacts are provided by K337, R366, S367, and K388. The active-site Proton acceptor is the K337.

Belongs to the enolase family. Mg(2+) serves as cofactor.

The protein localises to the cytoplasm. It is found in the secreted. Its subcellular location is the cell surface. It carries out the reaction (2R)-2-phosphoglycerate = phosphoenolpyruvate + H2O. It functions in the pathway carbohydrate degradation; glycolysis; pyruvate from D-glyceraldehyde 3-phosphate: step 4/5. Catalyzes the reversible conversion of 2-phosphoglycerate (2-PG) into phosphoenolpyruvate (PEP). It is essential for the degradation of carbohydrates via glycolysis. This chain is Enolase, found in Desulforapulum autotrophicum (strain ATCC 43914 / DSM 3382 / VKM B-1955 / HRM2) (Desulfobacterium autotrophicum).